The following is a 479-amino-acid chain: UDP-N-acetylmuramate--L-alanine ligase (479 aa).

128–134 (GAHGKTT) is a binding site for ATP.

The protein belongs to the MurCDEF family.

Its subcellular location is the cytoplasm. It catalyses the reaction UDP-N-acetyl-alpha-D-muramate + L-alanine + ATP = UDP-N-acetyl-alpha-D-muramoyl-L-alanine + ADP + phosphate + H(+). It functions in the pathway cell wall biogenesis; peptidoglycan biosynthesis. Its function is as follows. Cell wall formation. This is UDP-N-acetylmuramate--L-alanine ligase from Psychrobacter arcticus (strain DSM 17307 / VKM B-2377 / 273-4).